The sequence spans 777 residues: MTNNNDPSLQAQSLRDQLNDWSYRYYVQDDPAVPDAEYDRVFRALKDLEAQYPDLVTADSPTQRVGDVPLDAFEQVQHEVPMLSLDNAFDDEELWAFDKRIRERLDVSEIIDYVAEPKLDGLAVSLLYENGELVRAATRGDGQTGENITVNARTIRSVPLKLRGNDVPKRLEVRGEVVMPHAGFEELNARQQEAGLKLFANPRNAAAGSLRQLDSRITASRPLEFYAYSMAQLEGWEHPPTHSAMLDALRDWGLRVNPEIRVCHGVEALLRFYQGILEKREHLDYDIDGVVYKVNRFDWQDDLGFVSRAPRWAIAHKFPAQEELTVLNGVDWQVGRTGALTPVARLEPVHVGGVIVSNATLHNIDEIQRLDIRIGDTVVVYRAGDVIPKVVRALPERRPANAQGIALPSSCPVCGSEILRGHDQVVARCTGGLICGDQRREAIKHFASRRAMDIDGLGDKLVDALVDQELITTVADLYRLKAEQVAGLERMGEKSADNLIAALEASKTVGLGRFLFALGILQIGEETAKNLADCFGDLDSIRHAPLLLLLAVPDVGLEVAKAIGAFFAESDNEAVIDGLLAQGVSPQASGVPSAAFVKSLTLAQLLKSAKRLGMNLEGIGDKSLDILGSHFRTVTELSAAAAEGAGAEPKGVRSGVMTQLAKALAENDWRGRLQDAEKKVADMAARAPQEMESQPLEGQTWVLTGTLEQFTRNQAKQALQQLGAKVAGSVSKNTRMVVAGASAGSKLAKAESLGIEVCDEAALLSLLNQHGIDPGAL.

Residues 35-39 (DAEYD), 84-85 (SL), and E116 each bind NAD(+). Catalysis depends on K118, which acts as the N6-AMP-lysine intermediate. NAD(+) is bound by residues R139, E176, K293, and K317. Positions 411, 414, 429, and 435 each coordinate Zn(2+). One can recognise a BRCT domain in the interval 691–777 (MESQPLEGQT…NQHGIDPGAL (87 aa)).

It belongs to the NAD-dependent DNA ligase family. LigA subfamily. Mg(2+) is required as a cofactor. The cofactor is Mn(2+).

The enzyme catalyses NAD(+) + (deoxyribonucleotide)n-3'-hydroxyl + 5'-phospho-(deoxyribonucleotide)m = (deoxyribonucleotide)n+m + AMP + beta-nicotinamide D-nucleotide.. Functionally, DNA ligase that catalyzes the formation of phosphodiester linkages between 5'-phosphoryl and 3'-hydroxyl groups in double-stranded DNA using NAD as a coenzyme and as the energy source for the reaction. It is essential for DNA replication and repair of damaged DNA. In Alcanivorax borkumensis (strain ATCC 700651 / DSM 11573 / NCIMB 13689 / SK2), this protein is DNA ligase.